A 348-amino-acid polypeptide reads, in one-letter code: NADH-ubiquinone oxidoreductase chain 2 (348 aa).

9 helical membrane passes run P3–S23, F60–M80, T96–P116, I149–G169, I178–A197, L202–L219, L246–I266, D274–L294, and L326–L346.

It belongs to the complex I subunit 2 family.

It is found in the mitochondrion inner membrane. The catalysed reaction is a ubiquinone + NADH + 5 H(+)(in) = a ubiquinol + NAD(+) + 4 H(+)(out). In terms of biological role, core subunit of the mitochondrial membrane respiratory chain NADH dehydrogenase (Complex I) that is believed to belong to the minimal assembly required for catalysis. Complex I functions in the transfer of electrons from NADH to the respiratory chain. The immediate electron acceptor for the enzyme is believed to be ubiquinone. The sequence is that of NADH-ubiquinone oxidoreductase chain 2 (MT-ND2) from Carassius auratus (Goldfish).